The sequence spans 717 residues: Protein Teyrha-meyrha (717 aa).

Residues 140-152 (FRTDSASPTCTSH) are compositionally biased toward polar residues. Disordered regions lie at residues 140–214 (FRTD…SNPA), 229–270 (HLAA…APPV), 440–498 (KIPP…QPGK), 511–539 (SQKDPHPDEHDVSTNVTTASSSSWPGEAP), 563–594 (DSCGVGVNDTNSSSSTHNNGGGSNKDLMMDTA), and 624–717 (QRRQ…DTKA). The span at 195 to 214 (ATSSSASSSSSSSCSTSNPA) shows a compositional bias: low complexity. The segment covering 235–263 (PHHHPHTHAHSHPHPLAHPHAHSHHHVGH) has biased composition (basic residues). Residues 442 to 451 (PPEDDAKSQE) show a composition bias toward basic and acidic residues. Residues 452–466 (EIETVDVESCNDEVP) are compositionally biased toward acidic residues. Positions 471 to 482 (ELATPSSGSSGT) are enriched in polar residues. Over residues 513-522 (KDPHPDEHDV) the composition is skewed to basic and acidic residues. Composition is skewed to low complexity over residues 523–533 (STNVTTASSSS) and 570–580 (NDTNSSSSTHN). Polar residues predominate over residues 630 to 640 (QNVGSSRSLEN). Residues 667–686 (NNNNNNNNNNNNSNSNNNNN) are compositionally biased toward low complexity. The segment covering 687–704 (PSTKYAESMENSLSQLSS) has biased composition (polar residues).

In embryos, expressed specifically in M12 (at protein level).

It is found in the nucleus. Functionally, required for the correct synaptic targeting of motoneurons RP5 and V to muscle 12 (M12). May be involved in the negative regulation of Tl in M12. Involved in the correct patterning of veins in the proximal (costal) region of the wing blade. In Drosophila melanogaster (Fruit fly), this protein is Protein Teyrha-meyrha.